We begin with the raw amino-acid sequence, 85 residues long: ATP synthase subunit c (85 aa).

Transmembrane regions (helical) follow at residues 10–30 (IAVSIMIGLAALGTALGFGIL) and 53–73 (FIVAGLIDAIAMIGVAVALLF).

The protein belongs to the ATPase C chain family. In terms of assembly, F-type ATPases have 2 components, F(1) - the catalytic core - and F(0) - the membrane proton channel. F(1) has five subunits: alpha(3), beta(3), gamma(1), delta(1), epsilon(1). F(0) has three main subunits: a(1), b(2) and c(10-14). The alpha and beta chains form an alternating ring which encloses part of the gamma chain. F(1) is attached to F(0) by a central stalk formed by the gamma and epsilon chains, while a peripheral stalk is formed by the delta and b chains.

It is found in the cell inner membrane. In terms of biological role, f(1)F(0) ATP synthase produces ATP from ADP in the presence of a proton or sodium gradient. F-type ATPases consist of two structural domains, F(1) containing the extramembraneous catalytic core and F(0) containing the membrane proton channel, linked together by a central stalk and a peripheral stalk. During catalysis, ATP synthesis in the catalytic domain of F(1) is coupled via a rotary mechanism of the central stalk subunits to proton translocation. Its function is as follows. Key component of the F(0) channel; it plays a direct role in translocation across the membrane. A homomeric c-ring of between 10-14 subunits forms the central stalk rotor element with the F(1) delta and epsilon subunits. This chain is ATP synthase subunit c, found in Idiomarina loihiensis (strain ATCC BAA-735 / DSM 15497 / L2-TR).